Reading from the N-terminus, the 526-residue chain is Peptide chain release factor 3 (526 aa).

In terms of domain architecture, tr-type G spans 11–277 (SKRRTFAIIS…SLIKWAPSPL (267 aa)). Residues 20 to 27 (SHPDAGKT), 88 to 92 (DTPGH), and 142 to 145 (NKLD) contribute to the GTP site.

This sequence belongs to the TRAFAC class translation factor GTPase superfamily. Classic translation factor GTPase family. PrfC subfamily.

It is found in the cytoplasm. Its function is as follows. Increases the formation of ribosomal termination complexes and stimulates activities of RF-1 and RF-2. It binds guanine nucleotides and has strong preference for UGA stop codons. It may interact directly with the ribosome. The stimulation of RF-1 and RF-2 is significantly reduced by GTP and GDP, but not by GMP. This is Peptide chain release factor 3 from Buchnera aphidicola subsp. Acyrthosiphon pisum (strain 5A).